Reading from the N-terminus, the 396-residue chain is Tryptophan synthase beta chain (396 aa).

N6-(pyridoxal phosphate)lysine is present on K86.

The protein belongs to the TrpB family. As to quaternary structure, tetramer of two alpha and two beta chains. The cofactor is pyridoxal 5'-phosphate.

The catalysed reaction is (1S,2R)-1-C-(indol-3-yl)glycerol 3-phosphate + L-serine = D-glyceraldehyde 3-phosphate + L-tryptophan + H2O. The protein operates within amino-acid biosynthesis; L-tryptophan biosynthesis; L-tryptophan from chorismate: step 5/5. Functionally, the beta subunit is responsible for the synthesis of L-tryptophan from indole and L-serine. The protein is Tryptophan synthase beta chain of Aliivibrio salmonicida (strain LFI1238) (Vibrio salmonicida (strain LFI1238)).